Consider the following 295-residue polypeptide: Indole-3-glycerol phosphate synthase (295 aa).

This sequence belongs to the TrpC family.

It catalyses the reaction 1-(2-carboxyphenylamino)-1-deoxy-D-ribulose 5-phosphate + H(+) = (1S,2R)-1-C-(indol-3-yl)glycerol 3-phosphate + CO2 + H2O. Its pathway is amino-acid biosynthesis; L-tryptophan biosynthesis; L-tryptophan from chorismate: step 4/5. This is Indole-3-glycerol phosphate synthase from Synechococcus sp. (strain CC9605).